The sequence spans 127 residues: Major sperm protein 77/79 (127 aa).

N-acetylalanine is present on Ala2. An MSP domain is found at 9–126 (DIQTQPGTKI…RRKNLPIEYN (118 aa)).

Sperm.

The protein resides in the cell projection. The protein localises to the pseudopodium. Its subcellular location is the cytoplasm. It localises to the cytoskeleton. In terms of biological role, central component in molecular interactions underlying sperm crawling. Forms an extensive filament system that extends from sperm villipoda, along the leading edge of the pseudopod. In Caenorhabditis elegans, this protein is Major sperm protein 77/79 (msp-77).